Consider the following 279-residue polypeptide: Large ribosomal subunit protein uL2 (279 aa).

Disordered stretches follow at residues 1–59 and 224–279; these read MGIR…GGHK and VAMN…KNKR. Composition is skewed to basic residues over residues 50–59 and 269–279; these read TTRHKGGGHK and VRRRRTGKNKR.

This sequence belongs to the universal ribosomal protein uL2 family. In terms of assembly, part of the 50S ribosomal subunit. Forms a bridge to the 30S subunit in the 70S ribosome.

In terms of biological role, one of the primary rRNA binding proteins. Required for association of the 30S and 50S subunits to form the 70S ribosome, for tRNA binding and peptide bond formation. It has been suggested to have peptidyltransferase activity; this is somewhat controversial. Makes several contacts with the 16S rRNA in the 70S ribosome. The sequence is that of Large ribosomal subunit protein uL2 from Arthrobacter sp. (strain FB24).